Consider the following 77-residue polypeptide: Sec-independent protein translocase protein TatA 2 (77 aa).

A helical transmembrane segment spans residues 2 to 22 (FPGGISMTELIIILAVILLLF). Residues 52–77 (KEVKAEDVKTEERKEEKKEEKEKVEA) are disordered.

This sequence belongs to the TatA/E family. As to quaternary structure, forms a complex with TatC.

The protein localises to the cell inner membrane. Part of the twin-arginine translocation (Tat) system that transports large folded proteins containing a characteristic twin-arginine motif in their signal peptide across membranes. TatA could form the protein-conducting channel of the Tat system. In Aquifex aeolicus (strain VF5), this protein is Sec-independent protein translocase protein TatA 2.